The primary structure comprises 77 residues: UPF0248 protein Pcal_0252 (77 aa).

It belongs to the UPF0248 family.

This is UPF0248 protein Pcal_0252 from Pyrobaculum calidifontis (strain DSM 21063 / JCM 11548 / VA1).